The primary structure comprises 328 residues: Phosphate acyltransferase (328 aa).

Belongs to the PlsX family. As to quaternary structure, homodimer. Probably interacts with PlsY.

It is found in the cytoplasm. The enzyme catalyses a fatty acyl-[ACP] + phosphate = an acyl phosphate + holo-[ACP]. It participates in lipid metabolism; phospholipid metabolism. Catalyzes the reversible formation of acyl-phosphate (acyl-PO(4)) from acyl-[acyl-carrier-protein] (acyl-ACP). This enzyme utilizes acyl-ACP as fatty acyl donor, but not acyl-CoA. The protein is Phosphate acyltransferase of Campylobacter jejuni subsp. doylei (strain ATCC BAA-1458 / RM4099 / 269.97).